A 341-amino-acid polypeptide reads, in one-letter code: S-adenosylmethionine:tRNA ribosyltransferase-isomerase (341 aa).

The protein belongs to the QueA family. Monomer.

The protein localises to the cytoplasm. It carries out the reaction 7-aminomethyl-7-carbaguanosine(34) in tRNA + S-adenosyl-L-methionine = epoxyqueuosine(34) in tRNA + adenine + L-methionine + 2 H(+). It participates in tRNA modification; tRNA-queuosine biosynthesis. Transfers and isomerizes the ribose moiety from AdoMet to the 7-aminomethyl group of 7-deazaguanine (preQ1-tRNA) to give epoxyqueuosine (oQ-tRNA). This is S-adenosylmethionine:tRNA ribosyltransferase-isomerase from Staphylococcus aureus (strain USA300).